A 274-amino-acid chain; its full sequence is Membrane protein insertase YidC 2 (274 aa).

A signal peptide spans 1-20; it reads MKKKLKLTSLLGLSLLIMTA. The N-palmitoyl cysteine moiety is linked to residue cysteine 21. Cysteine 21 carries S-diacylglycerol cysteine lipidation. Transmembrane regions (helical) follow at residues 56 to 76, 128 to 148, 167 to 187, and 205 to 225; these read ISIG…LLPV, SDSL…FQAL, VDTT…STWL, and GIPV…ALYW.

Belongs to the OXA1/ALB3/YidC family. Type 2 subfamily.

The protein resides in the cell membrane. Its function is as follows. Required for the insertion and/or proper folding and/or complex formation of integral membrane proteins into the membrane. Involved in integration of membrane proteins that insert both dependently and independently of the Sec translocase complex, as well as at least some lipoproteins. The polypeptide is Membrane protein insertase YidC 2 (Streptococcus pneumoniae serotype 4 (strain ATCC BAA-334 / TIGR4)).